A 254-amino-acid polypeptide reads, in one-letter code: MAYISENELKFLRLLERTKRLTKEDMSANVWKVSAATKILNKMIYTLQNDETTNDILHEYRQEVLQLKLLAEAESKSSAEERLKVIEKIPRVFPDVQVTVADSKNDNEAESYDFEKESAAGLRATQRSIYRSDLRKQLLSSNKHRAQDTSEDQEFMKNELVEEELANSLATMARSFKTMMSAAGDVIKEDTERAILMAKEVDDNKTALGIQSERVERHAYKCGYDCFKVMLIVLIFMSFVSMVLMMKIFKKAST.

Residues 1–228 lie on the Cytoplasmic side of the membrane; that stretch reads MAYISENELK…AYKCGYDCFK (228 aa). A helical; Anchor for type IV membrane protein membrane pass occupies residues 229-249; that stretch reads VMLIVLIFMSFVSMVLMMKIF. Topologically, residues 250–254 are lumenal; that stretch reads KKAST.

Belongs to the USE1 family.

The protein localises to the endoplasmic reticulum membrane. In terms of biological role, SNARE that may be involved in targeting and fusion of Golgi-derived retrograde transport vesicles with the ER. The chain is Vesicle transport protein USE1 from Caenorhabditis elegans.